The primary structure comprises 250 residues: DNA repair protein RecO (250 aa).

Belongs to the RecO family.

In terms of biological role, involved in DNA repair and RecF pathway recombination. In Staphylococcus haemolyticus (strain JCSC1435), this protein is DNA repair protein RecO.